Reading from the N-terminus, the 2604-residue chain is MESDSVAGSASSSDAAASHLPSVSVLLDALEQSASTPRIANGLSQRLLRSLQFSNENKLSFKALNGACRVLRLACIQAKESRKSGCVSPLVESSDCGVIVDSPHKKSDSSHTEDCWFECVESCVGIFTEFFSSTNDAKVYVLRSSVCVDCLFELFWEKAVRNNVMKLIIDLMKIRPLCEEDKSAKLQVCSKYLETFTQVKERENDSVDLSVDLLAGMRDLIKSDSRYYQALFREGECFLHIVSLLNGNLDEANGEKLVLNVLQTLTSLLANNDTSKFAFKALAGKGYQTLQSLLLDFFQWKPTQRLLDALLDMLVDGKFDDKGSALIKNEDVIILYLNVLQKSSESLQCYGLNLFQQLLRDSISNRASCVRAGMLHLLLDWFSLENDDSVILKITQLTQTIGGHSISGKDIRKIFALLRSERVGNQQRYRSLLLACLLSMLNEKGPTGFFDMNGVESGIVIRTPVQWPANKGFSFCCWLRVESFPGDGKMGIFSFMSKNGKGCFAALGKDGLSYVSLNLKRQCVNVHTNLVCKKWHFICVSHSIGRAFWGGSLLRCYVNGDLVSSERCSYPKVTDVLTSCLIGTRITLPHIQDNDGLESIRDVFPFFGQIGPVYLFNDSLSSEQVQAIYSLGPSYMYAFLENEMTCPFSDNPFPSGILDGKDGLASKVSFGLNAQASDGRRLFNVSRVSDHLQERLAFEADIMVGTQLCSRRLLQQIIYCVGGISVFFPLITQSDRCESETLNEETSAMPTKERMTAEVIELIASVLDENPANQQQMHLLAGFPILGFLLQSIQPKQLNLETLSSLKHLFNVISSSGFAEQLVEDAISSIFLNPHIWLHAAYNVQRELYMFLIQQLDNDPRLLGSLCRLPRVIDIVWNFYWESERYCKGSKPLMHPTRTIAERPSRDEIHKIRLLLLSLGEMSLRHNISSGDVKALTAFFETCQDVACIEDVLHMVIRAISQTSVLVSFLEQVNLIGGCHIFVDLLQRDYEPIRLLSLQFLGRLLYDVPSERKGPKFFNLAVGRTKSLSQGHKKIGARTQPIFLAMSDRLFQYPQTDNLRATLFDVLLGGASPKQVLQKHNQVDKHRSKPSNSHFFLPQIFVFIFEFLSGCKDGLARMKIISDILDLLDSNPMNVEALMEFGWSAWLTASMKLDVIKDYRSELLNHDDLALNEQHFVRGLFCVVLCHYILSVKGGWQQLEETVNFILLQSEHNDVPYRSFLRDLYEDLIQRLVELSSEDNIFLSHPCRDNVLYLLRLVDEMLVREFGSRLLFPAISTDFSEDLLQLGNREDPTLGLDESFQRFLTEEISRNTECQQSCTTVTELMTNERWWNLYDNLWKIICDINGRGPVKMSPKSLATGPSIGQRARGLVESLNVPAAEMAAVVVSGGIGSALSGKMNKNVDKAMLLRGEKCPRIVFRLVTLYLCMSSLEKATRCVQQVTSLLPSFLAADDEQSKSRLHLFIGCLLYVRSQYGKLDDGARFHVISHLIRETVSCGKSILATSGMNKDDSSDSGGIFKEMGSIQNLIHKDRVLAAVTDETTYMKTLISDRTRQVQALGERNNETLSIECNSKKAFDGELQNVLKTVVTWDENRRVSVQLSHEEQQQNVTEKWIHMLRSLMDERGPWSATPFPNNILNRWKLDRTEDSWRRRPKLRRNYHFDERLCHPPSTSTATENETSNVINESKSGVIHIPEQMKKFLLKGIRRITDEGGSDSCENDSSQAEQSFMDTSADIQFSELVRTSSGLKDVVQDKVDASSLEVGTSEVLTSVPCVLVTPKRKLAGWLAVMKNVLHFSGEFLVEGTGGSAVFKNFSTSKGSDVTKAENKQNLVKWSSPYDSETFLDLESGNKNKKPLKKVKRHRRWKIGKVKSVHWTRYLLQYTALEIFFQESVPPVFLNFASQKNAKEVGMLIVSTRNEFLFPKNVPRDRTAMISFVDRRIAMEMAETARDRWRRREITNFEYLMILNTLAGRSYNDLTQYPVFPWVVADYSSETLDFSKASTFRDLSKPVGALDTRRFEIFEDRYHSFSDPDIPSFYYGSHYSSMGSVLYYLLRLEPFTSLHRSLQGGKFDHADRLFQSVEGSFRNCLSNTSDVKELIPEFFYMPEFLVNSNSYHLGVKQDGEPLGEVCLPPWAKGSPEMFIARNREALESEYVSSHLHDWIDLIFGHKQRGKPAVEAANIFYYLTYEGAVDVENMEDQLQISAIEDQIANFGQTPIQIFRKKHPRRGPPIPIAHPLYFAPASINLSSILPATTHSPSAVLYVGVVDSNIVLVNQGLTLSVKIWLTTQLHSGGNFTFSSAQDPFFGVGSDVLSPRNIGSPLADNVELGSQCFAAMQMPLENFLVSCGNWENSFHVISLTDGRVVQSIRHHKDVVSCVAVTADSTILATGSYDTTVMVWDILRMRTPEKRVRNTHAEVLRKDIVIADAPSHILCGHDDIITCLYVSTDLDIVISGSKDGTCVFHTLREGRYIRSLKHPSGSAVSKLAASHHGRIVLYGDDDLSLHLYSINGKHLASSESNGRINCLELSKCGEFLVSAGDQGQIIVRSMNTLEVVKRYNGAGKIITSLTVTQEECFLAGTKDGALLVYSIENPQHRKPSPIWSIKS.

Positions 1761 to 1912 (VGTSEVLTSV…NAKEVGMLIV (152 aa)) constitute a BEACH-type PH domain. The 291-residue stretch at 1936–2226 (DRRIAMEMAE…QIFRKKHPRR (291 aa)) folds into the BEACH domain. WD repeat units lie at residues 2254–2293 (HSPSAVLYVGVVDSNIVLVNQGLTLSVKIWLTTQLHSGGN), 2368–2407 (HHKDVVSCVAVTADSTILATGSYDTTVMVWDILRMRTPEK), 2433–2474 (GHDD…RSLK), 2476–2515 (PSGSAVSKLAASHHGRIVLYGDDDLSLHLYSINGKHLASS), 2516–2557 (ESNG…KRYN), and 2558–2596 (GAGKIITSLTVTQEECFLAGTKDGALLVYSIENPQHRKP).

Its function is as follows. May be involved in the suppression of BCHC1 activity. The sequence is that of BEACH domain-containing protein B from Arabidopsis thaliana (Mouse-ear cress).